We begin with the raw amino-acid sequence, 98 residues long: Beta-elicitin MGM-beta (98 aa).

3 disulfide bridges follow: Cys3–Cys71, Cys27–Cys56, and Cys51–Cys95.

It belongs to the elicitin family.

Its subcellular location is the secreted. Its function is as follows. Induces local and distal defense responses (incompatible hypersensitive reaction) in plants from the solanaceae and cruciferae families. Elicits leaf necrosis and causes the accumulation of pathogenesis-related proteins. Might interact with the lipidic molecules of the plasma membrane. The polypeptide is Beta-elicitin MGM-beta (Phytophthora megasperma (Potato pink rot fungus)).